The primary structure comprises 433 residues: Chaperone SurA (433 aa).

An N-terminal signal peptide occupies residues 1 to 20 (MKNWRTLIFGLMFSVSTAFA). 2 PpiC domains span residues 171 to 272 (DTEL…KVND) and 282 to 382 (VTEV…QLLD).

The protein localises to the periplasm. The catalysed reaction is [protein]-peptidylproline (omega=180) = [protein]-peptidylproline (omega=0). In terms of biological role, chaperone involved in the correct folding and assembly of outer membrane proteins. Recognizes specific patterns of aromatic residues and the orientation of their side chains, which are found more frequently in integral outer membrane proteins. May act in both early periplasmic and late outer membrane-associated steps of protein maturation. In Photorhabdus laumondii subsp. laumondii (strain DSM 15139 / CIP 105565 / TT01) (Photorhabdus luminescens subsp. laumondii), this protein is Chaperone SurA.